Here is a 372-residue protein sequence, read N- to C-terminus: GTPase Obg (372 aa).

One can recognise an Obg domain in the interval 1-159 (MKFVDEATIE…RRLRLELKVL (159 aa)). In terms of domain architecture, OBG-type G spans 160-336 (ADVGLLGLPN…LIWALQDYLD (177 aa)). GTP-binding positions include 166-173 (GLPNAGKS), 191-195 (FTTLH), 213-216 (DIPG), 288-291 (NKLD), and 317-319 (SGL). 2 residues coordinate Mg(2+): Ser-173 and Thr-193. The segment at 341 to 372 (KEQITQDKADGSYVHEDPRFDTTRDAPPSGKD) is disordered.

The protein belongs to the TRAFAC class OBG-HflX-like GTPase superfamily. OBG GTPase family. As to quaternary structure, monomer. Requires Mg(2+) as cofactor.

It localises to the cytoplasm. In terms of biological role, an essential GTPase which binds GTP, GDP and possibly (p)ppGpp with moderate affinity, with high nucleotide exchange rates and a fairly low GTP hydrolysis rate. Plays a role in control of the cell cycle, stress response, ribosome biogenesis and in those bacteria that undergo differentiation, in morphogenesis control. The chain is GTPase Obg from Bordetella avium (strain 197N).